The chain runs to 564 residues: Dihydroxy-acid dehydratase (564 aa).

Residue Asp-80 participates in Mg(2+) binding. Cys-121 provides a ligand contact to [2Fe-2S] cluster. Mg(2+) is bound by residues Asp-122 and Lys-123. Lys-123 carries the N6-carboxylysine modification. Cys-194 is a [2Fe-2S] cluster binding site. Glu-447 provides a ligand contact to Mg(2+). Ser-473 acts as the Proton acceptor in catalysis.

The protein belongs to the IlvD/Edd family. In terms of assembly, homodimer. It depends on [2Fe-2S] cluster as a cofactor. Mg(2+) is required as a cofactor.

It catalyses the reaction (2R)-2,3-dihydroxy-3-methylbutanoate = 3-methyl-2-oxobutanoate + H2O. It carries out the reaction (2R,3R)-2,3-dihydroxy-3-methylpentanoate = (S)-3-methyl-2-oxopentanoate + H2O. It functions in the pathway amino-acid biosynthesis; L-isoleucine biosynthesis; L-isoleucine from 2-oxobutanoate: step 3/4. The protein operates within amino-acid biosynthesis; L-valine biosynthesis; L-valine from pyruvate: step 3/4. Its function is as follows. Functions in the biosynthesis of branched-chain amino acids. Catalyzes the dehydration of (2R,3R)-2,3-dihydroxy-3-methylpentanoate (2,3-dihydroxy-3-methylvalerate) into 2-oxo-3-methylpentanoate (2-oxo-3-methylvalerate) and of (2R)-2,3-dihydroxy-3-methylbutanoate (2,3-dihydroxyisovalerate) into 2-oxo-3-methylbutanoate (2-oxoisovalerate), the penultimate precursor to L-isoleucine and L-valine, respectively. This chain is Dihydroxy-acid dehydratase, found in Listeria innocua serovar 6a (strain ATCC BAA-680 / CLIP 11262).